Reading from the N-terminus, the 211-residue chain is Neuroendocrine protein 7B2 (211 aa).

The signal sequence occupies residues 1–26; the sequence is MVSRMVSTMLSGLLFWLASGWTPAFA. Residues 106–132 are disordered; the sequence is DFSEDQGYPDPPNPCPVGKTDDGCLEN. C120 and C129 form a disulfide bridge. A phosphoserine mark is found at S140 and S204. Residues 173 to 211 form a disordered region; the sequence is GGERRKRRSVNPYLQGQRLDNVVAKKSVPHFSDEDKDPE.

Belongs to the 7B2 family. Interacts with PCSK2/PC2 early in the secretory pathway. Dissociation occurs at later stages. In terms of processing, proteolytically cleaved in the Golgi by a furin-like convertase to generate bioactive peptides. Post-translationally, sulfated on tyrosine residues.

The protein localises to the secreted. Its function is as follows. Acts as a molecular chaperone for PCSK2/PC2, preventing its premature activation in the regulated secretory pathway. Binds to inactive PCSK2 in the endoplasmic reticulum and facilitates its transport from there to later compartments of the secretory pathway where it is proteolytically matured and activated. Also required for cleavage of PCSK2 but does not appear to be involved in its folding. Plays a role in regulating pituitary hormone secretion. The C-terminal peptide inhibits PCSK2 in vitro. This chain is Neuroendocrine protein 7B2 (SCG5), found in Pan troglodytes (Chimpanzee).